The primary structure comprises 126 residues: Small ribosomal subunit protein uS13 (126 aa).

The tract at residues 93–126 (RRGLPVRGQRTKTNARTRKGPKRTVAGKKKAGRK) is disordered.

Belongs to the universal ribosomal protein uS13 family. Part of the 30S ribosomal subunit. Forms a loose heterodimer with protein S19. Forms two bridges to the 50S subunit in the 70S ribosome.

Located at the top of the head of the 30S subunit, it contacts several helices of the 16S rRNA. In the 70S ribosome it contacts the 23S rRNA (bridge B1a) and protein L5 of the 50S subunit (bridge B1b), connecting the 2 subunits; these bridges are implicated in subunit movement. Contacts the tRNAs in the A and P-sites. In Beutenbergia cavernae (strain ATCC BAA-8 / DSM 12333 / CCUG 43141 / JCM 11478 / NBRC 16432 / NCIMB 13614 / HKI 0122), this protein is Small ribosomal subunit protein uS13.